The sequence spans 347 residues: Bifunctional methylenetetrahydrofolate dehydrogenase/cyclohydrolase 2, mitochondrial (347 aa).

Substrate-binding positions include 98–102 (YVRNK) and 145–147 (VQL). Residues 214–216 (GRS) and Arg-247 contribute to the NAD(+) site. 323 to 327 (PGGVG) lines the substrate pocket.

It belongs to the tetrahydrofolate dehydrogenase/cyclohydrolase family. It depends on Mg(2+) as a cofactor. As to expression, isoform 1, isoform 4 and isoform 5 are expressed in brain and placenta.

Its subcellular location is the mitochondrion inner membrane. It catalyses the reaction (6R)-5,10-methylene-5,6,7,8-tetrahydrofolate + NAD(+) = (6R)-5,10-methenyltetrahydrofolate + NADH. The catalysed reaction is (6R)-5,10-methenyltetrahydrofolate + H2O = (6R)-10-formyltetrahydrofolate + H(+). The enzyme catalyses (6R)-5,10-methylene-5,6,7,8-tetrahydrofolate + NADP(+) = (6R)-5,10-methenyltetrahydrofolate + NADPH. Its pathway is one-carbon metabolism; tetrahydrofolate interconversion. In terms of biological role, bifunctional mitochondrial folate-interconverting enzyme that has both NAD/NADP-dependent methylenetetrahydrofolate dehydrogenase and methenyltetrahydrofolate cyclohydrolase activities. The chain is Bifunctional methylenetetrahydrofolate dehydrogenase/cyclohydrolase 2, mitochondrial from Homo sapiens (Human).